The chain runs to 116 residues: Large ribosomal subunit protein bL17 (116 aa).

The protein belongs to the bacterial ribosomal protein bL17 family. As to quaternary structure, part of the 50S ribosomal subunit. Contacts protein L32.

The protein is Large ribosomal subunit protein bL17 of Helicobacter hepaticus (strain ATCC 51449 / 3B1).